The primary structure comprises 324 residues: Methenyltetrahydromethanopterin cyclohydrolase (324 aa).

The protein belongs to the MCH family.

It is found in the cytoplasm. The catalysed reaction is 5,10-methenyl-5,6,7,8-tetrahydromethanopterin + H2O = N(5)-formyl-5,6,7,8-tetrahydromethanopterin + H(+). The protein operates within one-carbon metabolism; methanogenesis from CO(2); 5,10-methenyl-5,6,7,8-tetrahydromethanopterin from CO(2): step 3/3. Functionally, catalyzes the reversible interconversion of 5-formyl-H(4)MPT to methenyl-H(4)MPT(+). In Methanococcus aeolicus (strain ATCC BAA-1280 / DSM 17508 / OCM 812 / Nankai-3), this protein is Methenyltetrahydromethanopterin cyclohydrolase.